We begin with the raw amino-acid sequence, 838 residues long: Ras-interacting protein RIP3 (838 aa).

Disordered regions lie at residues 66-97 (VSTSNNNATSGNSTPPNNAISPNQQQQQQQQA), 157-290 (KPTT…TSPK), and 305-336 (NSKTLQKSDKTSEKENKQQQPDSSKTQQQQQA). 3 stretches are compositionally biased toward low complexity: residues 67–97 (STSNNNATSGNSTPPNNAISPNQQQQQQQQA), 157–241 (KPTT…QQKP), and 248–284 (PQNISQPQNISQQQNTNNVQQNNQQQQQQQQQQQQQQ). A compositionally biased stretch (basic and acidic residues) spans 310–321 (QKSDKTSEKENK). Residues 441-515 (QLKVRVIEKA…KDEVLVLCPN (75 aa)) form the CRIM domain. Disordered regions lie at residues 522–581 (KSSS…QQTQ) and 594–646 (QQQQ…GPDA). Composition is skewed to low complexity over residues 537 to 556 (NNNNSVNSNSSNNSNSSNNN), 563 to 581 (QPQQSQQQQQQTQQTQQTQ), and 594 to 620 (QQQQQQQQQHPQQIQQQLSSNQLQPDQ). Residues 621-631 (VGGGGGGGGGN) are compositionally biased toward gly residues. The region spanning 648–717 (LVVKITLPDS…GGADLILVSR (70 aa)) is the RBD domain.

This sequence belongs to the SIN1 family. As to quaternary structure, interacts with activated RasG. Part of a complex, TORC2, consisting of tor, lst8, piaA and ripA. Additional proteins, such as 14-3-3 and heat-shock proteins, may also belong to the TORC2 complex.

Its function is as follows. Component of a Ras-regulated pathway involved in integrating chemotaxis and signal relay pathways that are essential for aggregation. The chain is Ras-interacting protein RIP3 (ripA) from Dictyostelium discoideum (Social amoeba).